Here is a 330-residue protein sequence, read N- to C-terminus: Class III chitinase ARB_03514 (330 aa).

Positions 1–22 are cleaved as a signal peptide; it reads MSSVKNILSFVALFAGVKTAYA. One can recognise a GH18 domain in the interval 23–314; sequence GLNSPGHNNV…SAVKGALSAG (292 aa). N-linked (GlcNAc...) asparagine glycosylation is found at Asn-61 and Asn-135. Catalysis depends on Glu-155, which acts as the Proton donor. Asn-278 and Asn-302 each carry an N-linked (GlcNAc...) asparagine glycan.

The protein belongs to the glycosyl hydrolase 18 family. Chitinase class III subfamily. Monomer.

Its subcellular location is the secreted. The enzyme catalyses Random endo-hydrolysis of N-acetyl-beta-D-glucosaminide (1-&gt;4)-beta-linkages in chitin and chitodextrins.. Its function is as follows. Secreted chitinase involved in the degradation of chitin, a component of the cell walls of fungi and exoskeletal elements of some animals (including worms and arthropods). Plays a morphogenetic role during apical growth, cell division and differentiation (cell wall morphogenesis). The polypeptide is Class III chitinase ARB_03514 (Arthroderma benhamiae (strain ATCC MYA-4681 / CBS 112371) (Trichophyton mentagrophytes)).